The primary structure comprises 304 residues: Syntaxin-132 (304 aa).

Position 1 is an N-acetylmethionine (Met-1). The segment at 1-30 (MNDLLKGSFELPRGQSSREGDVELGEQQGG) is disordered. The Cytoplasmic segment spans residues 1–275 (MNDLLKGSFE…AKSLQKNSRK (275 aa)). Coiled-coil stretches lie at residues 34–67 (LEDFFKKVQVIDKQYDKLDKLLKKLQASHEESKS) and 129–162 (TLSLKKKLKDKMAEFQVLRENIQQEYRDVVDRRV). One can recognise a t-SNARE coiled-coil homology domain in the interval 204–266 (LAEIQERHDA…QSGNTALQRA (63 aa)). A helical; Anchor for type IV membrane protein transmembrane segment spans residues 276–296 (WMCIAIIILLIVVAVIVVGVL). Over 297–304 (KPWKNKSA) the chain is Vesicular.

It belongs to the syntaxin family. Part of the t-SNARE complex. As to expression, widely expressed in all tissues throughout plant development.

It localises to the cell membrane. In terms of biological role, vesicle trafficking protein that functions in the secretory pathway. Acts in coordination with SYP123 to mediate tip-focused membrane trafficking for root hair tip growth. Functions in root hair elongation by forming SNARE complexes with VAMP721,VAMP722 or VAMP724. Involved in cytokinesis. Acts as a cell plate-specific syntaxin, required for the fusion of vesicles at the plane of cell division. Required for secretory trafficking to the plasma membrane during interphase. Involved in the regulation of density of the H(+) ATPase proteins at the plasma membrane of root and shoot in epidermal cells. Modulation of SYP132 expression by auxin affects clathrin-sensitive H(+) ATPase traffic from the plasma membrane, and influences apoplastic acidification and plant growth. This is Syntaxin-132 from Arabidopsis thaliana (Mouse-ear cress).